We begin with the raw amino-acid sequence, 164 residues long: Transcription antitermination protein NusB (164 aa).

Belongs to the NusB family.

Its function is as follows. Involved in transcription antitermination. Required for transcription of ribosomal RNA (rRNA) genes. Binds specifically to the boxA antiterminator sequence of the ribosomal RNA (rrn) operons. The protein is Transcription antitermination protein NusB of Desulfovibrio desulfuricans (strain ATCC 27774 / DSM 6949 / MB).